The chain runs to 153 residues: Ribonuclease K3 (153 aa).

Residues M1–A26 form the signal peptide. N30 is a glycosylation site (N-linked (GlcNAc...) asparagine). H41 (proton acceptor) is an active-site residue. 4 cysteine pairs are disulfide-bonded: C49-C107, C63-C117, C81-C132, and C88-C95. N-linked (GlcNAc...) asparagine glycosylation occurs at N58. K64 to T68 provides a ligand contact to substrate. N-linked (GlcNAc...) asparagine glycosylation occurs at N85. Residue K89 participates in substrate binding. H148 acts as the Proton donor in catalysis.

This sequence belongs to the pancreatic ribonuclease family. As to quaternary structure, interacts (via N-terminus) with bacterial lipopolysaccharide (LPS). Kidney.

The protein resides in the secreted. It localises to the lysosome. Its subcellular location is the cytoplasmic granule. Ribonuclease which shows a preference for the pyrimidines uridine and cytosine. Has potent antibacterial activity against a range of Gram-positive and Gram-negative bacteria, including P.aeruginosa, A.baumanii, M.luteus, S.aureus, E.faecalis, E.faecium, S.saprophyticus and E.coli. Causes loss of bacterial membrane integrity, and also promotes agglutination of Gram-negative bacteria. Probably contributes to urinary tract sterility. Bactericidal activity is independent of RNase activity. This Sus scrofa (Pig) protein is Ribonuclease K3 (RNASE6).